The sequence spans 795 residues: MADPAAQSSAQPRLQQAQSSGPTGSNSNPGAGSSDPARPGLSQQQWSSQKKAQVRSFPRAKKLEKLGVFSSCKANDACKCNGWKNPNPPTAARMELQQQAASLTETCRSCGHSLAEHVSHLENVSEEEINRLLGMVVDVENLFMSVHKEEDTDTKQVYFYLFKLLRKCILQMGKPVVEGSLGSPPFEKPNIEQGVLNFVQYKFSHLAPKERQTMYELSKMFLLCLNYWKLETPSQFRQRAQKEDAAAYKVDYTRWLCYCHVPQSNDSLPRYETCQVFGRSLLKSIFTVTRRQLLEKFRVEKDKLPPEKRTLILTHFPKFLSMLEEEIYGENSPIWEADFTMPASEGTQLGHQTVLSPVSISGSPHSKGSSASALGVTGLDVASSEPTIGEKRKLPEALTLEDAKRIRVMGDIPMELVNEVMKTITDPAAMLGPETSLLSANAARDETARLEERRGIIEFHVIGNSLSQKSNKKILMWLVGLQNVFSHQLPRMPKEYITRLVFDPKHKTLALIKDGRVIGGICFRMFPTQGFTEIVFCAVTSNEQVKGYGTHLMNHLKEYHIKHGILYFLTYADEYAIGYFKKQGFSKDIKVPKSRYLGYIKDYEGATLMECELNPRIPYTELSHIIKRQKEIIKKLIERKQNQIRKVYPGLTCFKEGVRQIPVESIPGIRETGWKPSAKEKSKELKDPDLLYNMLKNLLAQIKTHPDAWPFMEPVKKSEAPDYYEVIRFPIDLKTMTERLKNRYYVTKKLFIADLQRVITNCREYNPPDSEYCKSANTLEKFFYFKLKEAGLIDK.

The span at 1 to 18 (MADPAAQSSAQPRLQQAQ) shows a compositional bias: polar residues. Positions 1–55 (MADPAAQSSAQPRLQQAQSSGPTGSNSNPGAGSSDPARPGLSQQQWSSQKKAQVR) are disordered. A compositionally biased stretch (low complexity) spans 19-34 (SSGPTGSNSNPGAGSS). The N-acetyltransferase domain maps to 461-614 (VIGNSLSQKS…GATLMECELN (154 aa)). E533 serves as the catalytic Proton donor/acceptor. Acetyl-CoA-binding positions include 537–539 (CAV), 544–550 (QVKGYGT), and Y575. Succinyl-CoA-binding positions include 537–539 (CAV), 544–550 (QVKGYGT), and Y575. The loop 3 stretch occupies residues 597-606 (LGYIKDYEGA). In terms of domain architecture, Bromo spans 686–790 (KDPDLLYNML…KFFYFKLKEA (105 aa)).

This sequence belongs to the acetyltransferase family. GCN5 subfamily.

Its subcellular location is the nucleus. The protein resides in the chromosome. It localises to the cytoplasm. It is found in the cytoskeleton. The protein localises to the microtubule organizing center. Its subcellular location is the centrosome. The enzyme catalyses L-lysyl-[histone] + acetyl-CoA = N(6)-acetyl-L-lysyl-[histone] + CoA + H(+). It catalyses the reaction L-lysyl-[protein] + acetyl-CoA = N(6)-acetyl-L-lysyl-[protein] + CoA + H(+). The catalysed reaction is succinyl-CoA + L-lysyl-[protein] = N(6)-succinyl-L-lysyl-[protein] + CoA + H(+). It carries out the reaction glutaryl-CoA + L-lysyl-[protein] = N(6)-glutaryl-L-lysyl-[protein] + CoA + H(+). In terms of biological role, protein lysine acyltransferase that can act as a acetyltransferase, glutaryltransferasesucc, succinyltransferase or malonyltransferase, depending on the context. Acts as a histone lysine succinyltransferase: catalyzes succinylation of histone H3 on 'Lys-79' (H3K79succ), with a maximum frequency around the transcription start sites of genes. Succinylation of histones gives a specific tag for epigenetic transcription activation. Association with the 2-oxoglutarate dehydrogenase complex, which provides succinyl-CoA, is required for histone succinylation. In different complexes, functions either as an acetyltransferase (HAT) or as a succinyltransferase: in the SAGA and ATAC complexes, acts as a histone acetyltransferase. Has significant histone acetyltransferase activity with core histones, but not with nucleosome core particles. Has a a strong preference for acetylation of H3 at 'Lys-9' (H3K9ac). Acetylation of histones gives a specific tag for epigenetic transcription activation. Also acetylates non-histone proteins, such as tbx5. Involved in heart and limb development by mediating acetylation of tbx5. Together with kat2b, required for growth and differentiation of craniofacial cartilage and bone by regulating acetylation of histone H3 at 'Lys-9' (H3K9ac). Also acts as a histone glutaryltransferase: catalyzes glutarylation of histone H4 on 'Lys-91' (H4K91glu), a mark that destabilizes nucleosomes by promoting dissociation of the H2A-H2B dimers from nucleosomes. The polypeptide is Histone acetyltransferase KAT2A (Danio rerio (Zebrafish)).